A 153-amino-acid polypeptide reads, in one-letter code: D-aminoacyl-tRNA deacylase (153 aa).

The short motif at 137–138 (GP) is the Gly-cisPro motif, important for rejection of L-amino acids element.

This sequence belongs to the DTD family. Homodimer.

The protein localises to the cytoplasm. The catalysed reaction is glycyl-tRNA(Ala) + H2O = tRNA(Ala) + glycine + H(+). It carries out the reaction a D-aminoacyl-tRNA + H2O = a tRNA + a D-alpha-amino acid + H(+). In terms of biological role, an aminoacyl-tRNA editing enzyme that deacylates mischarged D-aminoacyl-tRNAs. Also deacylates mischarged glycyl-tRNA(Ala), protecting cells against glycine mischarging by AlaRS. Acts via tRNA-based rather than protein-based catalysis; rejects L-amino acids rather than detecting D-amino acids in the active site. By recycling D-aminoacyl-tRNA to D-amino acids and free tRNA molecules, this enzyme counteracts the toxicity associated with the formation of D-aminoacyl-tRNA entities in vivo and helps enforce protein L-homochirality. This Herpetosiphon aurantiacus (strain ATCC 23779 / DSM 785 / 114-95) protein is D-aminoacyl-tRNA deacylase.